The following is a 460-amino-acid chain: Ammonium transporter 1 member 3 (460 aa).

10 helical membrane passes run 15–37, 50–72, 98–117, 124–146, 166–188, 209–227, 255–277, 305–327, 337–356, and 377–399; these read AIYLLFSAYLVFVMQLGFAMLCA, LTNVVDAVVGSLSYYLFGFAFAF, FFLYQWAFAIAVAGITSGSI, TAYLVFSFFLTGFVYPVVAHWLW, IDFAGSGVVHLVGGIAGFWGSIV, NATLVVLGTLLLWFGWFGF, AVTTTLAGSTAGIVTLFGRRLLV, PWAAILCGFCAAWVLIGLNILAL, AAQLHGGCGAWGLIFTGLFA, and GLILGGGWGLFGAQIVELLSIVV.

The protein belongs to the ammonia transporter channel (TC 1.A.11.2) family. As to expression, leaves.

Its subcellular location is the membrane. In terms of biological role, ammonium transporter that may be involved in ammonium transport throughout the plant. The polypeptide is Ammonium transporter 1 member 3 (AMT1-3) (Solanum lycopersicum (Tomato)).